The primary structure comprises 145 residues: Small ribosomal subunit protein bS16 (145 aa).

Positions 82–145 (IKERAATNNP…EAAAEEQTEA (64 aa)) are disordered. Positions 95–115 (EPGKKAKERAEERAEKAREAA) are enriched in basic and acidic residues. Low complexity predominate over residues 116–137 (EAAAAAAAAPAEEAAAEAPAEA).

It belongs to the bacterial ribosomal protein bS16 family.

In Novosphingobium aromaticivorans (strain ATCC 700278 / DSM 12444 / CCUG 56034 / CIP 105152 / NBRC 16084 / F199), this protein is Small ribosomal subunit protein bS16.